A 331-amino-acid polypeptide reads, in one-letter code: Peroxidase 69 (331 aa).

Residues 1 to 23 (MGRGYNLLFVLVTFLVLVAAVTA) form the signal peptide. 4 disulfide bridges follow: Cys-46–Cys-122, Cys-79–Cys-84, Cys-128–Cys-327, and Cys-205–Cys-237. His-77 functions as the Proton acceptor in the catalytic mechanism. Residues Asp-78, Val-81, Gly-83, Asp-85, and Ser-87 each contribute to the Ca(2+) site. Residue Asn-93 is glycosylated (N-linked (GlcNAc...) asparagine). Residue Pro-168 participates in substrate binding. His-198 contacts heme b. Residue Thr-199 participates in Ca(2+) binding. N-linked (GlcNAc...) asparagine glycosylation is present at Asn-216. Residues Asp-248, Ser-251, and Asp-256 each contribute to the Ca(2+) site.

The protein belongs to the peroxidase family. Classical plant (class III) peroxidase subfamily. Requires heme b as cofactor. Ca(2+) is required as a cofactor. In terms of tissue distribution, mainly expressed in roots and slightly in leaves.

It is found in the secreted. The enzyme catalyses 2 a phenolic donor + H2O2 = 2 a phenolic radical donor + 2 H2O. In terms of biological role, removal of H(2)O(2), oxidation of toxic reductants, biosynthesis and degradation of lignin, suberization, auxin catabolism, response to environmental stresses such as wounding, pathogen attack and oxidative stress. These functions might be dependent on each isozyme/isoform in each plant tissue. The protein is Peroxidase 69 (PER69) of Arabidopsis thaliana (Mouse-ear cress).